A 442-amino-acid chain; its full sequence is Septin-8 (442 aa).

Residues 1–16 (MAATDLERISNAEPEP) are compositionally biased toward basic and acidic residues. Residues 1 to 21 (MAATDLERISNAEPEPRSLSL) are disordered. Ala2 is subject to N-acetylalanine. Phosphoserine is present on Ser10. The Septin-type G domain maps to 41 to 307 (QGFSFNILCV…ELYRRCKLEE (267 aa)). Residues 51-58 (GETGIGKS) form a G1 motif region. Residues 51–58 (GETGIGKS), Gly106, 187–195 (KADTISKSE), Gly241, and Arg256 each bind GTP. The tract at residues 103 to 106 (DAVG) is G3 motif. The tract at residues 186–189 (AKAD) is G4 motif. Residues 322 to 407 (LQETYEAKRK…FNCRKAAMEA (86 aa)) adopt a coiled-coil conformation. Polar residues predominate over residues 411 to 420 (QALHATSQQP). The tract at residues 411 to 442 (QALHATSQQPLRKDKDKKKVGGWSSIYSVTIP) is disordered.

Belongs to the TRAFAC class TrmE-Era-EngA-EngB-Septin-like GTPase superfamily. Septin GTPase family. Septins polymerize into heterooligomeric protein complexes that form filaments, and can associate with cellular membranes, actin filaments and microtubules. GTPase activity is required for filament formation. Interacts with SEPTIN7. Interacts with CDK14, SEPTIN4 and SEPTIN5. Interacts with VAMP2; the interaction inhibits interaction of VAMP2 with SYP. Interacts with STX1A. As to expression, expressed in cerebrum, hippocampus and cerebellum (at protein level). Expressed in heart (at protein level).

The protein resides in the cytoplasm. It localises to the cytoskeleton. It is found in the synapse. Its subcellular location is the cell projection. The protein localises to the axon. The protein resides in the cytoplasmic vesicle. It localises to the secretory vesicle. It is found in the synaptic vesicle membrane. Its subcellular location is the presynapse. Its function is as follows. Filament-forming cytoskeletal GTPase. May play a role in platelet secretion. Seems to participate in the process of SNARE complex formation in synaptic vesicles. The protein is Septin-8 of Rattus norvegicus (Rat).